A 159-amino-acid polypeptide reads, in one-letter code: Ribosomal RNA large subunit methyltransferase H (159 aa).

S-adenosyl-L-methionine contacts are provided by residues L76, G108, and 127 to 132 (FSKMTF).

The protein belongs to the RNA methyltransferase RlmH family. As to quaternary structure, homodimer.

It localises to the cytoplasm. It carries out the reaction pseudouridine(1915) in 23S rRNA + S-adenosyl-L-methionine = N(3)-methylpseudouridine(1915) in 23S rRNA + S-adenosyl-L-homocysteine + H(+). Specifically methylates the pseudouridine at position 1915 (m3Psi1915) in 23S rRNA. This is Ribosomal RNA large subunit methyltransferase H from Bacillus subtilis (strain 168).